Consider the following 463-residue polypeptide: Probable glycosyltransferase 3 (463 aa).

A disordered region spans residues 1-20 (MAVTGGGRPAARQQAARGKQ). The Cytoplasmic segment spans residues 1-24 (MAVTGGGRPAARQQAARGKQMQRT). The segment covering 9 to 20 (PAARQQAARGKQ) has biased composition (low complexity). Residues 25-47 (FNNVKITLICGFITLLVLRGTVG) form a helical; Signal-anchor for type II membrane protein membrane-spanning segment. The Lumenal segment spans residues 48–463 (INLLTYGVGG…ALKMDAKIES (416 aa)). The disordered stretch occupies residues 82–125 (EIRSDTDDDDDDEEEEPLGVDASTTTTTNSTTTTATAARRRSSN). Residues 87–99 (TDDDDDDEEEEPL) are compositionally biased toward acidic residues. The segment covering 103 to 118 (ASTTTTTNSTTTTATA) has biased composition (low complexity). N-linked (GlcNAc...) asparagine glycosylation is found at N110, N125, and N442.

This sequence belongs to the glycosyltransferase 34 family.

It localises to the golgi apparatus membrane. Its function is as follows. Probable glycosyltransferase that may be involved in the biosynthesis of xyloglucan. The polypeptide is Probable glycosyltransferase 3 (Oryza sativa subsp. indica (Rice)).